A 155-amino-acid chain; its full sequence is 3-dehydroquinate dehydratase 1 (155 aa).

Y28 (proton acceptor) is an active-site residue. Residues N80, H86, and D93 each contribute to the substrate site. H106 functions as the Proton donor in the catalytic mechanism. Residues 107-108 (VT) and R117 contribute to the substrate site.

This sequence belongs to the type-II 3-dehydroquinase family. Homododecamer.

The enzyme catalyses 3-dehydroquinate = 3-dehydroshikimate + H2O. It participates in metabolic intermediate biosynthesis; chorismate biosynthesis; chorismate from D-erythrose 4-phosphate and phosphoenolpyruvate: step 3/7. Catalyzes a trans-dehydration via an enolate intermediate. The sequence is that of 3-dehydroquinate dehydratase 1 (aroQ1) from Bradyrhizobium diazoefficiens (strain JCM 10833 / BCRC 13528 / IAM 13628 / NBRC 14792 / USDA 110).